The sequence spans 350 residues: C-X-C chemokine receptor type 1 (350 aa).

At 1 to 39 (MSNITDPQMWDFDDLNFTGMPPADEDYSPCMLETETLNK) the chain is on the extracellular side. N-linked (GlcNAc...) asparagine glycans are attached at residues N3 and N16. The chain crosses the membrane as a helical span at residues 40–66 (YVVIIAYALVFLLSLLGNSLVMLVILY). At 67 to 75 (SRVGRSVTD) the chain is on the cytoplasmic side. A helical membrane pass occupies residues 76–96 (VYLLNLALADLLFALTLPIWA). Topologically, residues 97-111 (ASKVNGWIFGTFLCK) are extracellular. An intrachain disulfide couples C110 to C187. A helical membrane pass occupies residues 112-133 (VVSLLKEVNFYSGILLLACISV). Residues 134 to 154 (DRYLAIVHATRTLTQKRHLVK) lie on the Cytoplasmic side of the membrane. The chain crosses the membrane as a helical span at residues 155–174 (FVCLGCWGLSMNLSLPFFLF). Residues 175 to 199 (RQAYHPNNSSPVCYEVLGNDTAKWR) lie on the Extracellular side of the membrane. Residues 200 to 220 (MVLRILPHTFGFIVPLFVMLF) traverse the membrane as a helical segment. Topologically, residues 221 to 242 (CYGFTLRTLFKAHMGQKHRAMR) are cytoplasmic. Residues 243–264 (VIFAVVLIFLLCWLPYNLVLLA) form a helical membrane-spanning segment. Topologically, residues 265–285 (DTLMRTQVIQESCERRNNIGR) are extracellular. Residues 286 to 308 (ALDATEILGFLHSCLNPIIYAFI) form a helical membrane-spanning segment. At 309-350 (GQNFRHGFLKILAMHGLVSKEFLARHRVTSYTSSSVNVSSNL) the chain is on the cytoplasmic side.

The protein belongs to the G-protein coupled receptor 1 family. Interacts with IL8. Interacts with GNAI2.

The protein resides in the cell membrane. Functionally, receptor to interleukin-8, which is a powerful neutrophils chemotactic factor. Binding of IL-8 to the receptor causes activation of neutrophils. This response is mediated via a G-protein that activates a phosphatidylinositol-calcium second messenger system. The sequence is that of C-X-C chemokine receptor type 1 (CXCR1) from Homo sapiens (Human).